The chain runs to 168 residues: UPF0114 protein PC1_0431 (168 aa).

3 helical membrane passes run 15-35, 53-73, and 136-156; these read LLAP…IKFF, LVLV…LVMV, and LMWY…MGYL.

This sequence belongs to the UPF0114 family.

It localises to the cell membrane. The protein is UPF0114 protein PC1_0431 of Pectobacterium carotovorum subsp. carotovorum (strain PC1).